Consider the following 481-residue polypeptide: Multiple inositol polyphosphate phosphatase 1 (481 aa).

The first 30 residues, 1–30, serve as a signal peptide directing secretion; that stretch reads MLRGARSHLPASVAPAAVLAAALLSSFARC. Histidine 89 is an active-site residue. 2 N-linked (GlcNAc...) asparagine glycosylation sites follow: asparagine 236 and asparagine 475. Positions 478–481 match the Prevents secretion from ER motif; that stretch reads SDEL.

The protein belongs to the histidine acid phosphatase family. MINPP1 subfamily. Post-translationally, N-glycosylated. Widely expressed with highest levels in kidney, intestine, thymus and liver.

It is found in the endoplasmic reticulum lumen. The protein resides in the secreted. The protein localises to the cell membrane. The enzyme catalyses 1D-myo-inositol hexakisphosphate + H2O = 1D-myo-inositol 1,2,4,5,6-pentakisphosphate + phosphate. It carries out the reaction 1D-myo-inositol 1,2,4,5,6-pentakisphosphate + H2O = 1D-myo-inositol 1,2,5,6-tetrakisphosphate + phosphate. It catalyses the reaction 1D-myo-inositol 1,2,5,6-tetrakisphosphate + H2O = 1D-myo-inositol 1,2,6-trisphosphate + phosphate. The catalysed reaction is 1D-myo-inositol 1,2,6-trisphosphate + H2O = 1D-myo-inositol 1,2-bisphosphate + phosphate. The enzyme catalyses 1D-myo-inositol 1,2-bisphosphate + H2O = 1D-myo-inositol 2-phosphate + phosphate. It carries out the reaction 1D-myo-inositol hexakisphosphate + H2O = 1D-myo-inositol 1,2,3,5,6-pentakisphosphate + phosphate. It catalyses the reaction 1D-myo-inositol 1,2,3,5,6-pentakisphosphate + H2O = 1D-myo-inositol 1,2,3,6-tetrakisphosphate + phosphate. The catalysed reaction is 1D-myo-inositol 1,2,3,6-tetrakisphosphate + H2O = 1D-myo-inositol 1,2,3-trisphosphate + phosphate. The enzyme catalyses 1D-myo-inositol 1,2,3-trisphosphate + H2O = 1D-myo-inositol 2,3-bisphosphate + phosphate. It carries out the reaction 1D-myo-inositol 2,3-bisphosphate + H2O = 1D-myo-inositol 2-phosphate + phosphate. It catalyses the reaction 1D-myo-inositol 1,3,4,5,6-pentakisphosphate + H2O = 1D-myo-inositol 1,4,5,6-tetrakisphosphate + phosphate. The catalysed reaction is 1D-myo-inositol 1,4,5,6-tetrakisphosphate + H2O = 1D-myo-inositol 1,4,5-trisphosphate + phosphate. The enzyme catalyses (2R)-2,3-bisphosphoglycerate + H2O = (2R)-2-phosphoglycerate + phosphate. Functionally, multiple inositol polyphosphate phosphatase that hydrolyzes 1D-myo-inositol 1,3,4,5,6-pentakisphosphate (InsP5[2OH]) and 1D-myo-inositol hexakisphosphate (InsP6) to a range of less phosphorylated inositol phosphates. This regulates the availability of these various small molecule second messengers and metal chelators which control many aspects of cell physiology. Has a weak in vitro activity towards 1D-myo-inositol 1,4,5-trisphosphate which is unlikely to be physiologically relevant. By regulating intracellular inositol polyphosphates pools, which act as metal chelators, it may control the availability of intracellular calcium and iron, which are important for proper neuronal development and homeostasis. May have a dual substrate specificity, and function as a 2,3-bisphosphoglycerate 3-phosphatase hydrolyzing 2,3-bisphosphoglycerate to 2-phosphoglycerate. 2,3-bisphosphoglycerate (BPG) is formed as part of the Rapoport-Luebering glycolytic bypass and is a regulator of systemic oxygen homeostasis as the major allosteric effector of hemoglobin. This Mus musculus (Mouse) protein is Multiple inositol polyphosphate phosphatase 1.